A 287-amino-acid polypeptide reads, in one-letter code: Protein HEXIM2 (287 aa).

2 disordered regions span residues 1-212 and 266-287; these read MKDW…RSKE and RLRQ…QPGS. Phosphoserine is present on serine 31. Threonine 34 and threonine 48 each carry phosphothreonine. Residues serine 53, serine 55, serine 73, serine 78, and serine 83 each carry the phosphoserine modification. Over residues 89 to 105 the composition is skewed to basic residues; sequence ARKKHRRRPSKRKRHWR. A compositionally biased stretch (basic and acidic residues) spans 115–134; that stretch reads KQQRDERQSQRASRVREEMF. The segment at 142-145 is interaction with P-TEFb; it reads PYNT. 2 stretches are compositionally biased toward basic and acidic residues: residues 181-212 and 266-280; these read GQGR…RSKE and RLRQ…EGGR. Residues 208–278 are a coiled coil; it reads GRSKEELVRD…QENEMWNREG (71 aa). The interval 227–287 is interaction with CCNT1, HEXIM1 and HEXIM2; it reads QAEEEMRRLR…GGRRGGQPGS (61 aa).

Belongs to the HEXIM family. Homooligomer and heterooligomer with HEXIM1; probably dimeric. Core component of the 7SK RNP complex, at least composed of 7SK RNA, LARP7, MEPCE, HEXIM1 (or HEXIM2) and P-TEFb (composed of CDK9 and CCNT1/cyclin-T1). Interacts with CCNT2.

It is found in the nucleus. In terms of biological role, transcriptional regulator which functions as a general RNA polymerase II transcription inhibitor. Core component of the 7SK RNP complex: in cooperation with 7SK snRNA sequesters P-TEFb in a large inactive 7SK snRNP complex preventing RNA polymerase II phosphorylation and subsequent transcriptional elongation. This is Protein HEXIM2 (HEXIM2) from Bos taurus (Bovine).